Consider the following 277-residue polypeptide: Formamidopyrimidine-DNA glycosylase (277 aa).

The Schiff-base intermediate with DNA role is filled by Pro2. The active-site Proton donor is the Glu3. Residue Lys58 is the Proton donor; for beta-elimination activity of the active site. DNA is bound by residues His97, Arg116, and Arg158. The FPG-type zinc finger occupies 243-277; it reads NVYGRAGAPCPRCGRSIRQRRIAQRSTWYCPGCQR. Arg267 functions as the Proton donor; for delta-elimination activity in the catalytic mechanism.

This sequence belongs to the FPG family. As to quaternary structure, monomer. The cofactor is Zn(2+).

It carries out the reaction Hydrolysis of DNA containing ring-opened 7-methylguanine residues, releasing 2,6-diamino-4-hydroxy-5-(N-methyl)formamidopyrimidine.. It catalyses the reaction 2'-deoxyribonucleotide-(2'-deoxyribose 5'-phosphate)-2'-deoxyribonucleotide-DNA = a 3'-end 2'-deoxyribonucleotide-(2,3-dehydro-2,3-deoxyribose 5'-phosphate)-DNA + a 5'-end 5'-phospho-2'-deoxyribonucleoside-DNA + H(+). In terms of biological role, involved in base excision repair of DNA damaged by oxidation or by mutagenic agents. Acts as a DNA glycosylase that recognizes and removes damaged bases. Has a preference for oxidized purines, such as 7,8-dihydro-8-oxoguanine (8-oxoG). Has AP (apurinic/apyrimidinic) lyase activity and introduces nicks in the DNA strand. Cleaves the DNA backbone by beta-delta elimination to generate a single-strand break at the site of the removed base with both 3'- and 5'-phosphates. The sequence is that of Formamidopyrimidine-DNA glycosylase from Alkalilimnicola ehrlichii (strain ATCC BAA-1101 / DSM 17681 / MLHE-1).